Consider the following 234-residue polypeptide: Purine nucleoside phosphorylase DeoD-type (234 aa).

Position 4 (His-4) interacts with a purine D-ribonucleoside. Phosphate is bound by residues Gly-20, Arg-24, Arg-43, and 87-90 (RVGT). Residues 179–181 (EME) and 203–204 (SN) each bind a purine D-ribonucleoside.

This sequence belongs to the PNP/UDP phosphorylase family. Homohexamer; trimer of homodimers.

It carries out the reaction a purine D-ribonucleoside + phosphate = a purine nucleobase + alpha-D-ribose 1-phosphate. It catalyses the reaction a purine 2'-deoxy-D-ribonucleoside + phosphate = a purine nucleobase + 2-deoxy-alpha-D-ribose 1-phosphate. Functionally, catalyzes the reversible phosphorolytic breakdown of the N-glycosidic bond in the beta-(deoxy)ribonucleoside molecules, with the formation of the corresponding free purine bases and pentose-1-phosphate. This Latilactobacillus sakei subsp. sakei (strain 23K) (Lactobacillus sakei subsp. sakei) protein is Purine nucleoside phosphorylase DeoD-type.